Reading from the N-terminus, the 147-residue chain is MAFLSWTFFPSFFHFLERNRFFLTFATQLHYLNPFYILSFRVEWHQIWENLAYSDTNTFFHEYCWKIFPCLSAGIRNNGCCDAAKGQGKNKQHTPKQEEEIPNTSLRRHRSCCNMFTCSSPCYYLEINVGVIGVRRPVLSEEQRKNC.

This is an uncharacterized protein from Saccharomyces cerevisiae (strain ATCC 204508 / S288c) (Baker's yeast).